The sequence spans 468 residues: N-acetyltransferase SLI1 (468 aa).

It localises to the endoplasmic reticulum. Functionally, confers resistance to the sphingolipid biosynthesis inhibitor drug myriocin (ISP-1). Inactivates ISP-1 by converting it into N-acetyl-myriocin. Cooperates with YPK1 in mediating resistance to myriocin. In Saccharomyces cerevisiae (strain ATCC 204508 / S288c) (Baker's yeast), this protein is N-acetyltransferase SLI1 (SLI1).